Here is a 151-residue protein sequence, read N- to C-terminus: UPF0178 protein YaiI (151 aa).

It belongs to the UPF0178 family.

The polypeptide is UPF0178 protein YaiI (Salmonella agona (strain SL483)).